Here is a 337-residue protein sequence, read N- to C-terminus: Phenylpyruvate C(3)-methyltransferase (337 aa).

This sequence belongs to the methyltransferase superfamily.

It carries out the reaction 3-phenylpyruvate + S-adenosyl-L-methionine = (3S)-2-oxo-3-phenylbutanoate + S-adenosyl-L-homocysteine + H(+). Its pathway is antibiotic biosynthesis. In terms of biological role, S-adenosyl-L-methionine-dependent methyltransferase involved in synthesis of the nonproteinogenic amino acid (2S,3S)-beta-methyl-phenylalanine, a building block of the antibiotic mannopeptimycin. The chain is Phenylpyruvate C(3)-methyltransferase (mppJ) from Streptomyces hygroscopicus.